A 500-amino-acid polypeptide reads, in one-letter code: Cytochrome P450 monooxygenase ausI (500 aa).

Residues 8-28 traverse the membrane as a helical segment; that stretch reads LALLGQPLVPGLMVVSAILYL. Heme is bound at residue cysteine 440.

It belongs to the cytochrome P450 family. Requires heme as cofactor.

The protein resides in the membrane. Its pathway is secondary metabolite biosynthesis; terpenoid biosynthesis. Its function is as follows. Cytochrome P450 monooxygenase; part of the gene cluster B that mediates the biosynthesis of the fungal meroterpenoid acetoxydehydroaustin. The first step of the pathway is the synthesis of 3,5-dimethylorsellinic acid by the polyketide synthase ausA. 3,5-dimethylorsellinic acid is then prenylated by the polyprenyl transferase ausN. Further epoxidation by the FAD-dependent monooxygenase ausM and cyclization by the probable terpene cyclase ausL lead to the formation of protoaustinoid A. Protoaustinoid A is then oxidized to spiro-lactone preaustinoid A3 by the combined action of the FAD-binding monooxygenases ausB and ausC, and the dioxygenase ausE. Acid-catalyzed keto-rearrangement and ring contraction of the tetraketide portion of preaustinoid A3 by ausJ lead to the formation of preaustinoid A4. The aldo-keto reductase ausK, with the help of ausH, is involved in the next step by transforming preaustinoid A4 into isoaustinone which is in turn hydroxylated by the P450 monooxygenase ausI to form austinolide. The cytochrome P450 monooxygenase ausG then modifies austinolide to austinol. Austinol is further acetylated to austin by the O-acetyltransferase ausP, which spontaneously changes to dehydroaustin. The cytochrome P450 monooxygenase then converts dehydroaustin is into 7-dehydrodehydroaustin. The hydroxylation catalyzed by ausR permits the second O-acetyltransferase ausQ to add an additional acetyl group to the molecule, leading to the formation of acetoxydehydroaustin. Due to genetic rearrangements of the clusters and the subsequent loss of some enzymes, the end product of the Penicillium brasilianum austinoid biosynthesis clusters is acetoxydehydroaustin. This chain is Cytochrome P450 monooxygenase ausI, found in Penicillium brasilianum.